The sequence spans 368 residues: uncharacterized protein (368 aa).

Helical transmembrane passes span 22 to 42 (VAGI…FTLI), 74 to 94 (FVKP…LLVL), 104 to 124 (FLKT…LNLF), 144 to 164 (VGDF…GASL), and 168 to 188 (WGVN…AVSL).

It belongs to the MscS (TC 1.A.23) family.

Its subcellular location is the cell membrane. This is an uncharacterized protein from Aquifex aeolicus (strain VF5).